The chain runs to 172 residues: uncharacterized protein (172 aa).

Residues 109–129 (MLLLYLYYNLLLLTASTPLTF) traverse the membrane as a helical segment.

It localises to the membrane. This is an uncharacterized protein from Saccharomyces cerevisiae (strain ATCC 204508 / S288c) (Baker's yeast).